Consider the following 481-residue polypeptide: E3 ubiquitin-protein ligase makorin-1 (481 aa).

3 C3H1-type zinc fingers span residues 55 to 82 (WTKQ…HDLS), 84 to 111 (SPYG…HSKP), and 208 to 235 (ETKK…HGDS). The interval 236 to 263 (CDMCGLQVLHPVDAAQRSQHIKSCIEAH) is makorin-type Cys-His. The RING-type zinc finger occupies 281 to 335 (CGICMEVVYEKANPSERRFGILSNCNHTYCLKCIRKWRSAKQFESKIIKSCPECR). The segment at 364–393 (AMSNKACRYFDEGRGSCPFGGNCFYKHAYP) adopts a C3H1-type 4 zinc-finger fold.

Interacts with p53/TP53 and CDKN1A. Interacts with TERT, modulating telomere length homeostasis. Auto-ubiquitinated; which leads to proteasomal degradation. Highly expressed in embryo, in specific cell types of the central nervous system, in brain with the strongest levels of expression in the mantle layers and in testis. Moderate to low levels in somatic tissues.

It carries out the reaction S-ubiquitinyl-[E2 ubiquitin-conjugating enzyme]-L-cysteine + [acceptor protein]-L-lysine = [E2 ubiquitin-conjugating enzyme]-L-cysteine + N(6)-ubiquitinyl-[acceptor protein]-L-lysine.. It functions in the pathway protein modification; protein ubiquitination. Functionally, E3 ubiquitin ligase catalyzing the covalent attachment of ubiquitin moieties onto substrate proteins. These substrates include FILIP1, p53/TP53, CDKN1A and TERT. Keeps cells alive by suppressing p53/TP53 under normal conditions, but stimulates apoptosis by repressing CDKN1A under stress conditions. Acts as a negative regulator of telomerase. Has negative and positive effects on RNA polymerase II-dependent transcription. This is E3 ubiquitin-protein ligase makorin-1 (Mkrn1) from Mus musculus (Mouse).